The following is a 288-amino-acid chain: Chitinase 5 (288 aa).

A signal peptide spans 1–29; sequence MANSPTPTMLAFLALGLALLLSATGQASA. The 35-residue stretch at 30–64 folds into the Chitin-binding type-1 domain; sequence QNCGCQSNMCCSKWGYCGTGKDYCGDGCRSGPCYG. 7 disulfides stabilise this stretch: Cys32/Cys40, Cys34/Cys46, Cys39/Cys53, Cys57/Cys62, Cys107/Cys156, Cys169/Cys178, and Cys256/Cys288. The Proton donor role is filled by Glu151.

This sequence belongs to the glycosyl hydrolase 19 family. Chitinase class IV subfamily. Expressed in sheaths and meristems and at lower levels in roots and leaves.

The catalysed reaction is Random endo-hydrolysis of N-acetyl-beta-D-glucosaminide (1-&gt;4)-beta-linkages in chitin and chitodextrins.. In terms of biological role, may function in reproductive organs during embryogenesis and seed maturation. In Oryza sativa subsp. japonica (Rice), this protein is Chitinase 5 (Cht5).